The following is a 91-amino-acid chain: uncharacterized protein (91 aa).

This is an uncharacterized protein from Archaeoglobus fulgidus (strain ATCC 49558 / DSM 4304 / JCM 9628 / NBRC 100126 / VC-16).